A 116-amino-acid polypeptide reads, in one-letter code: Large ribosomal subunit protein uL18 (116 aa).

This sequence belongs to the universal ribosomal protein uL18 family. In terms of assembly, part of the 50S ribosomal subunit; part of the 5S rRNA/L5/L18/L25 subcomplex. Contacts the 5S and 23S rRNAs.

In terms of biological role, this is one of the proteins that bind and probably mediate the attachment of the 5S RNA into the large ribosomal subunit, where it forms part of the central protuberance. The protein is Large ribosomal subunit protein uL18 of Ectopseudomonas mendocina (strain ymp) (Pseudomonas mendocina).